A 444-amino-acid polypeptide reads, in one-letter code: Endothelin-3 receptor (444 aa).

The first 18 residues, 1-18 (MATVILFVAWMACLMVGV), serve as a signal peptide directing secretion. Topologically, residues 19–88 (CYQEFQTQQN…SRAKIRHAFK (70 aa)) are extracellular. Asn-60 carries N-linked (GlcNAc...) asparagine glycosylation. The helical transmembrane segment at 89-113 (YVTTILSCVIFLVGIVGNSTLLRII) threads the bilayer. The Cytoplasmic segment spans residues 114-124 (YKNKCMRNGPN). Residues 125–145 (VLIASLALGDLFYILIAIPII) traverse the membrane as a helical segment. Residues 146–161 (SISFWLSTGHSEYIYQ) lie on the Extracellular side of the membrane. A helical membrane pass occupies residues 162–180 (LVHLYRARVYSLSLCALSI). Topologically, residues 181 to 201 (DRYRAVASWNRIRSIGIPVRK) are cytoplasmic. The helical transmembrane segment at 202-226 (AIELTLIWAVAIIVAVPEAIAFNLV) threads the bilayer. Residues 227 to 254 (ELDFRGQTILVCMLPMEQTSDFMRFYQE) lie on the Extracellular side of the membrane. A helical membrane pass occupies residues 255–279 (VKVWWLFGFYFCLPLACTGVFYTLM). At 280–307 (SCEMLSIKNGMRIALNDHMKQRREVAKT) the chain is on the cytoplasmic side. The chain crosses the membrane as a helical span at residues 308 to 328 (VFCLVVIFALCWLPLHVSSIF). The Extracellular segment spans residues 329–365 (VRLSATVKRACILKNKRSCIMAEIQTGVNYQLLMVMN). The chain crosses the membrane as a helical span at residues 366–386 (YTGINMASLNSCIGPVALYFV). The Cytoplasmic portion of the chain corresponds to 387–444 (SRKFKNCFQSCLCCWCHRPTLTITPMDEKGSGGKWKANGHDLDLDRSSSRLSNKYSSS). The segment at 416–444 (GSGGKWKANGHDLDLDRSSSRLSNKYSSS) is disordered. Positions 424–434 (NGHDLDLDRSS) are enriched in basic and acidic residues. The span at 435–444 (SRLSNKYSSS) shows a compositional bias: low complexity.

This sequence belongs to the G-protein coupled receptor 1 family. Endothelin receptor subfamily.

The protein localises to the cell membrane. Functionally, receptor for endothelin-3. Mediates its action by association with G proteins that activate a phosphatidylinositol-calcium second messenger system. In Xenopus laevis (African clawed frog), this protein is Endothelin-3 receptor.